The sequence spans 406 residues: Protein phosphatase 2C (406 aa).

In terms of domain architecture, PPM-type phosphatase spans 23–274 (RCGSNCVNGY…DNISCMIVQF (252 aa)). Residues D55, G56, D221, and D265 each coordinate Mn(2+).

Belongs to the PP2C family. In terms of assembly, monomer. The cofactor is Mg(2+). Mn(2+) is required as a cofactor.

The catalysed reaction is O-phospho-L-seryl-[protein] + H2O = L-seryl-[protein] + phosphate. It carries out the reaction O-phospho-L-threonyl-[protein] + H2O = L-threonyl-[protein] + phosphate. Its function is as follows. Enzyme with a broad specificity. In Leishmania chagasi, this protein is Protein phosphatase 2C.